The following is a 79-amino-acid chain: Cell division protein ZapB (79 aa).

Residues 6–78 adopt a coiled-coil conformation; sequence FEKLEVKVQQ…LRALLGKMEE (73 aa).

Belongs to the ZapB family. In terms of assembly, homodimer. The ends of the coiled-coil dimer bind to each other, forming polymers. Interacts with FtsZ.

Its subcellular location is the cytoplasm. Functionally, non-essential, abundant cell division factor that is required for proper Z-ring formation. It is recruited early to the divisome by direct interaction with FtsZ, stimulating Z-ring assembly and thereby promoting cell division earlier in the cell cycle. Its recruitment to the Z-ring requires functional FtsA or ZipA. This chain is Cell division protein ZapB, found in Yersinia enterocolitica serotype O:8 / biotype 1B (strain NCTC 13174 / 8081).